Consider the following 199-residue polypeptide: Recombination protein RecR (199 aa).

A C4-type zinc finger spans residues 58–73; sequence CARCGNITSADLCDIC. Positions 81 to 176 constitute a Toprim domain; sequence GELCVVEDVA…QVTSLAQGVP (96 aa).

It belongs to the RecR family.

Its function is as follows. May play a role in DNA repair. It seems to be involved in an RecBC-independent recombinational process of DNA repair. It may act with RecF and RecO. The protein is Recombination protein RecR of Cereibacter sphaeroides (strain ATCC 17025 / ATH 2.4.3) (Rhodobacter sphaeroides).